A 393-amino-acid polypeptide reads, in one-letter code: Formate-dependent phosphoribosylglycinamide formyltransferase (393 aa).

Residues 22-23 and Glu-82 contribute to the N(1)-(5-phospho-beta-D-ribosyl)glycinamide site; that span reads EL. Residues Arg-114, Lys-155, 160–165, 195–198, and Glu-203 contribute to the ATP site; these read SSGKGQ and EGFI. The ATP-grasp domain maps to 119–308; sequence RLAAEELDLP…QFALHARAIL (190 aa). Residues Glu-267 and Glu-279 each contribute to the Mg(2+) site. Residues Asp-286, Lys-356, and 363–364 each bind N(1)-(5-phospho-beta-D-ribosyl)glycinamide; that span reads RR.

This sequence belongs to the PurK/PurT family. As to quaternary structure, homodimer.

It catalyses the reaction N(1)-(5-phospho-beta-D-ribosyl)glycinamide + formate + ATP = N(2)-formyl-N(1)-(5-phospho-beta-D-ribosyl)glycinamide + ADP + phosphate + H(+). The protein operates within purine metabolism; IMP biosynthesis via de novo pathway; N(2)-formyl-N(1)-(5-phospho-D-ribosyl)glycinamide from N(1)-(5-phospho-D-ribosyl)glycinamide (formate route): step 1/1. Functionally, involved in the de novo purine biosynthesis. Catalyzes the transfer of formate to 5-phospho-ribosyl-glycinamide (GAR), producing 5-phospho-ribosyl-N-formylglycinamide (FGAR). Formate is provided by PurU via hydrolysis of 10-formyl-tetrahydrofolate. This is Formate-dependent phosphoribosylglycinamide formyltransferase from Pseudomonas fluorescens (strain ATCC BAA-477 / NRRL B-23932 / Pf-5).